A 407-amino-acid polypeptide reads, in one-letter code: RNA-binding motif, single-stranded-interacting protein 2 (407 aa).

An N-acetylmethionine modification is found at methionine 1. The tract at residues glutamine 29 to serine 54 is disordered. Positions serine 37–asparagine 50 are enriched in low complexity. RRM domains are found at residues threonine 56 to glutamine 129 and threonine 135 to glycine 220. Position 106 is a phosphoserine (serine 106). Threonine 269 bears the Phosphothreonine mark. 2 positions are modified to phosphoserine: serine 280 and serine 285.

The protein resides in the nucleus. The sequence is that of RNA-binding motif, single-stranded-interacting protein 2 (RBMS2) from Homo sapiens (Human).